The primary structure comprises 127 residues: Dual endothelin-1/VEGF signal peptide receptor (127 aa).

Residues 1–69 (MSTFYVTAVP…EMKSRWNWGS (69 aa)) lie on the Extracellular side of the membrane. The chain crosses the membrane as a helical span at residues 70–88 (ITCIMCFTCVGSQLSMSSS). At 89 to 127 (KASNFSGPLQLYQRGIGHITNPYRRPPAPAWPCSSSGTT) the chain is on the cytoplasmic side.

In terms of tissue distribution, prominently expressed in brain and heart tissues. Weakly expressed in aorta, adrenal gland, and lung tissues.

Its subcellular location is the cell membrane. In the Dahl salt-resistant strain, acts as a dual receptor for both endothelin-1 and the signal sequence of vascular endothelial growth factor A and does not act as a receptor for angiotensin-2. Does not bind the VEGFA mature protein. In the Dahl salt-sensitive strain, acts as a dual endothelin-1/angiotensin-2 receptor that is functionally coupled to a calcium-mobilizing transduction system, responding equivalently to both endothelin-1/EDN1 and angiotensin-2 peptides in a highly specific manner. May play a role in angiogenesis with a significant role in cardiovascular and neural development. The protein is Dual endothelin-1/VEGF signal peptide receptor of Rattus norvegicus (Rat).